A 767-amino-acid chain; its full sequence is Polyketide biosynthesis protein PksE (767 aa).

The acyl transferase stretch occupies residues 1-312; the sequence is MITYVFPGQG…QRNVQAGITA (312 aa). Catalysis depends on residues serine 87 and histidine 193.

The protein in the N-terminal section; belongs to the FabD family.

Its subcellular location is the cytoplasm. The catalysed reaction is holo-[ACP] + malonyl-CoA = malonyl-[ACP] + CoA. The protein operates within antibiotic biosynthesis; bacillaene biosynthesis. Functionally, probably involved in some intermediate steps for the synthesis of the antibiotic polyketide bacillaene which is involved in secondary metabolism. Probably has an acyl transferase activity and could also have a flavin mononucleotide-dependent oxidoreductase activity. This is Polyketide biosynthesis protein PksE (pksE) from Bacillus subtilis (strain 168).